The chain runs to 581 residues: Chaperonin GroEL 1 (581 aa).

ATP contacts are provided by residues 29–32 (TIGP), 86–90 (DGTTT), Gly413, and Asp492. The segment at 522-541 (PEPEAAGPGGPGADPMGGMG) is disordered. Residues 528–541 (GPGGPGADPMGGMG) are compositionally biased toward gly residues.

This sequence belongs to the chaperonin (HSP60) family. In terms of assembly, forms a cylinder of 14 subunits composed of two heptameric rings stacked back-to-back. Interacts with the co-chaperonin GroES.

The protein resides in the cytoplasm. It catalyses the reaction ATP + H2O + a folded polypeptide = ADP + phosphate + an unfolded polypeptide.. In terms of biological role, together with its co-chaperonin GroES, plays an essential role in assisting protein folding. The GroEL-GroES system forms a nano-cage that allows encapsulation of the non-native substrate proteins and provides a physical environment optimized to promote and accelerate protein folding. The sequence is that of Chaperonin GroEL 1 from Prochlorococcus marinus (strain MIT 9301).